A 560-amino-acid polypeptide reads, in one-letter code: 2-succinyl-5-enolpyruvyl-6-hydroxy-3-cyclohexene-1-carboxylate synthase (560 aa).

It belongs to the TPP enzyme family. MenD subfamily. As to quaternary structure, homodimer. Requires Mg(2+) as cofactor. It depends on Mn(2+) as a cofactor. Thiamine diphosphate serves as cofactor.

It carries out the reaction isochorismate + 2-oxoglutarate + H(+) = 5-enolpyruvoyl-6-hydroxy-2-succinyl-cyclohex-3-ene-1-carboxylate + CO2. It participates in quinol/quinone metabolism; 1,4-dihydroxy-2-naphthoate biosynthesis; 1,4-dihydroxy-2-naphthoate from chorismate: step 2/7. Its pathway is quinol/quinone metabolism; menaquinone biosynthesis. In terms of biological role, catalyzes the thiamine diphosphate-dependent decarboxylation of 2-oxoglutarate and the subsequent addition of the resulting succinic semialdehyde-thiamine pyrophosphate anion to isochorismate to yield 2-succinyl-5-enolpyruvyl-6-hydroxy-3-cyclohexene-1-carboxylate (SEPHCHC). This is 2-succinyl-5-enolpyruvyl-6-hydroxy-3-cyclohexene-1-carboxylate synthase from Lactococcus lactis subsp. lactis (strain IL1403) (Streptococcus lactis).